The sequence spans 296 residues: 33 kDa chaperonin (296 aa).

Intrachain disulfides connect Cys238–Cys240 and Cys271–Cys274.

It belongs to the HSP33 family. In terms of processing, under oxidizing conditions two disulfide bonds are formed involving the reactive cysteines. Under reducing conditions zinc is bound to the reactive cysteines and the protein is inactive.

It localises to the cytoplasm. Functionally, redox regulated molecular chaperone. Protects both thermally unfolding and oxidatively damaged proteins from irreversible aggregation. Plays an important role in the bacterial defense system toward oxidative stress. This is 33 kDa chaperonin from Clostridium botulinum (strain Loch Maree / Type A3).